The sequence spans 421 residues: D-amino acid dehydrogenase (421 aa).

4 to 18 contacts FAD; it reads VLVLGSGVVGLTSAW.

Belongs to the DadA oxidoreductase family. FAD is required as a cofactor.

It carries out the reaction a D-alpha-amino acid + A + H2O = a 2-oxocarboxylate + AH2 + NH4(+). Oxidative deamination of D-amino acids. This chain is D-amino acid dehydrogenase, found in Vibrio cholerae serotype O1 (strain ATCC 39315 / El Tor Inaba N16961).